The following is a 162-amino-acid chain: D-beta-D-heptose 1-phosphate adenylyltransferase (162 aa).

It carries out the reaction D-glycero-beta-D-manno-heptose 1-phosphate + ATP + H(+) = ADP-D-glycero-beta-D-manno-heptose + diphosphate. It participates in nucleotide-sugar biosynthesis; ADP-L-glycero-beta-D-manno-heptose biosynthesis; ADP-L-glycero-beta-D-manno-heptose from D-glycero-beta-D-manno-heptose 7-phosphate: step 3/4. Its pathway is bacterial outer membrane biogenesis; LPS core biosynthesis. In terms of biological role, catalyzes the ADP transfer from ATP to D-glycero-beta-D-manno-heptose 1-phosphate, yielding ADP-D-glycero-beta-D-manno-heptose. Cannot use GTP, UTP, or CTP as substrate. Is not active against the alpha-anomer substrate. Is also able to catalyze the ADP transfer to beta-glucose 1-phosphate in vitro, yielding ADP-beta-glucose. This Bordetella bronchiseptica (strain ATCC BAA-588 / NCTC 13252 / RB50) (Alcaligenes bronchisepticus) protein is D-beta-D-heptose 1-phosphate adenylyltransferase.